The following is a 528-amino-acid chain: Probable serine/threonine-protein kinase 380R (528 aa).

The disordered stretch occupies residues 70-96 (VKIPKSKSPPKVKSPKRKKSPVRRRVS). Positions 73-95 (PKSKSPPKVKSPKRKKSPVRRRV) are enriched in basic residues. The Protein kinase domain occupies 156-507 (FTNVKAVGKG…LANVLIHKIF (352 aa)). ATP is bound by residues 162-170 (VGKGSFGTV) and Lys187. Asp302 acts as the Proton acceptor in catalysis.

It belongs to the protein kinase superfamily. Ser/Thr protein kinase family.

It carries out the reaction L-seryl-[protein] + ATP = O-phospho-L-seryl-[protein] + ADP + H(+). The catalysed reaction is L-threonyl-[protein] + ATP = O-phospho-L-threonyl-[protein] + ADP + H(+). The sequence is that of Probable serine/threonine-protein kinase 380R from Invertebrate iridescent virus 6 (IIV-6).